The primary structure comprises 248 residues: Granzyme B (248 aa).

A signal peptide spans 1–18 (MKLLLLLLSFSLAPKTEA). The propeptide at 19-20 (GE) is activation peptide. The Peptidase S1 domain occupies 21-246 (IIGGHEAKPH…FLSWIKKTMK (226 aa)). A disulfide bond links cysteine 50 and cysteine 66. Catalysis depends on charge relay system residues histidine 65 and aspartate 109. 2 cysteine pairs are disulfide-bonded: cysteine 143/cysteine 210 and cysteine 174/cysteine 189. Serine 204 (charge relay system) is an active-site residue.

It belongs to the peptidase S1 family. Granzyme subfamily.

It is found in the secreted. Its subcellular location is the cytolytic granule. The enzyme catalyses Preferential cleavage: -Asp-|-Xaa- &gt;&gt; -Asn-|-Xaa- &gt; -Met-|-Xaa-, -Ser-|-Xaa-.. Inactivated by the serine protease inhibitor diisopropylfluorophosphate. Abundant protease in the cytosolic granules of cytotoxic T-cells and NK-cells which activates caspase-independent pyroptosis when delivered into the target cell through the immunological synapse. It cleaves after Asp. Once delivered into the target cell, acts by catalyzing cleavage of gasdermin-E (GSDME), releasing the pore-forming moiety of GSDME, thereby triggering pyroptosis and target cell death. Seems to be linked to an activation cascade of caspases (aspartate-specific cysteine proteases) responsible for apoptosis execution. Cleaves caspase-3 and -9 (CASP3 and CASP9, respectively) to give rise to active enzymes mediating apoptosis. Cleaves and activates CASP7 in response to bacterial infection, promoting plasma membrane repair. The polypeptide is Granzyme B (Gzmb) (Rattus norvegicus (Rat)).